The chain runs to 466 residues: 3-isopropylmalate dehydratase large subunit (466 aa).

The [4Fe-4S] cluster site is built by C347, C407, and C410.

The protein belongs to the aconitase/IPM isomerase family. LeuC type 1 subfamily. In terms of assembly, heterodimer of LeuC and LeuD. The cofactor is [4Fe-4S] cluster.

It catalyses the reaction (2R,3S)-3-isopropylmalate = (2S)-2-isopropylmalate. It functions in the pathway amino-acid biosynthesis; L-leucine biosynthesis; L-leucine from 3-methyl-2-oxobutanoate: step 2/4. Catalyzes the isomerization between 2-isopropylmalate and 3-isopropylmalate, via the formation of 2-isopropylmaleate. The chain is 3-isopropylmalate dehydratase large subunit from Acidiphilium cryptum (strain JF-5).